A 279-amino-acid chain; its full sequence is Estrogen receptor beta (279 aa).

Residues Ser-27–His-261 form the NR LBD domain.

The protein belongs to the nuclear hormone receptor family. NR3 subfamily. In terms of assembly, binds DNA as a homodimer. Can form a heterodimer with ESR1. Interacts with NCOA1, NCOA3, NCOA5 and NCOA6 coactivators, leading to a strong increase of transcription of target genes. Interacts with UBE1C and AKAP13. Interacts with DNTTIP2. Interacts with CCDC62 in the presence of estradiol/E2; this interaction seems to enhance the transcription of target genes. Interacts with DNAAF4. Interacts with PRMT2. Interacts with CCAR2 (via N-terminus) in a ligand-independent manner. Interacts with RBM39, in the presence of estradiol (E2). Interacts with STUB1/CHIP.

Its subcellular location is the nucleus. In terms of biological role, nuclear hormone receptor. Binds estrogens with an affinity similar to that of ESR1/ER-alpha, and activates expression of reporter genes containing estrogen response elements (ERE) in an estrogen-dependent manner. This chain is Estrogen receptor beta (ESR2), found in Macaca mulatta (Rhesus macaque).